The sequence spans 762 residues: LON peptidase N-terminal domain and RING finger protein 1 (762 aa).

The tract at residues 1 to 35 is disordered; sequence MSSPAVARASPGGNREASGGPRSRNGPWEVGGGGE. Residues 47-80 form a TPR 1 repeat; it reads WELLLRRGELLALGGHLKGALEAFAAALRRGAPA. The segment at 118 to 154 adopts an RING-type 1 zinc-finger fold; it reads CLSCRGFLSEPVTVPCGHSYCRRCLRRELRARCRLCR. TPR repeat units follow at residues 201–233, 235–267, and 268–301; these read ARAA…EPSD, TLKI…LPNW, and PEVY…DEDF. Phosphoserine is present on Ser420. An RING-type 2 zinc finger spans residues 468–506; it reads CSLCMRLFFEPVTTPCGHSFCKNCLERCLDHAPYCPLCK. The 211-residue stretch at 547–757 folds into the Lon N-terminal domain; sequence TAELSHLTKN…KIQHILTYFS (211 aa).

In Mus musculus (Mouse), this protein is LON peptidase N-terminal domain and RING finger protein 1 (Lonrf1).